Reading from the N-terminus, the 21-residue chain is Short neurotoxin E1 (21 aa).

The disordered stretch occupies residues Met1–Gln21.

Contains 4 disulfide bonds. Expressed by the venom gland.

Its subcellular location is the secreted. Functionally, binds to muscle nicotinic acetylcholine receptor (nAChR) and inhibit acetylcholine from binding to the receptor, thereby impairing neuromuscular transmission. The polypeptide is Short neurotoxin E1 (Micrurus pyrrhocryptus (Coral snake)).